We begin with the raw amino-acid sequence, 438 residues long: Dihydrolipoyllysine-residue acetyltransferase component of pyruvate dehydrogenase complex (438 aa).

The Lipoyl-binding domain occupies Met1–Glu76. Lys42 is subject to N6-lipoyllysine. A Peripheral subunit-binding (PSBD) domain is found at Lys132 to Gln169. Residues Ser172–Ser181 show a composition bias toward polar residues. The tract at residues Ser172 to His192 is disordered. His411 is a catalytic residue.

Belongs to the 2-oxoacid dehydrogenase family. As to quaternary structure, forms a 24-polypeptide structural core with octahedral symmetry. It depends on (R)-lipoate as a cofactor.

It catalyses the reaction N(6)-[(R)-dihydrolipoyl]-L-lysyl-[protein] + acetyl-CoA = N(6)-[(R)-S(8)-acetyldihydrolipoyl]-L-lysyl-[protein] + CoA. Functionally, the pyruvate dehydrogenase complex catalyzes the overall conversion of pyruvate to acetyl-CoA and CO(2). It contains multiple copies of three enzymatic components: pyruvate dehydrogenase (E1), dihydrolipoamide acetyltransferase (E2) and lipoamide dehydrogenase (E3). The sequence is that of Dihydrolipoyllysine-residue acetyltransferase component of pyruvate dehydrogenase complex (pdhC) from Mycoplasma capricolum subsp. capricolum (strain California kid / ATCC 27343 / NCTC 10154).